Consider the following 297-residue polypeptide: Signal-transducing adaptor protein 1 (297 aa).

In terms of domain architecture, PH spans 25–121 (PLYFEGFLLV…WRGFILTVTE (97 aa)). A Phosphotyrosine modification is found at Tyr170. Positions 179–273 (ECFYAVSRKE…GNLRPFIHSA (95 aa)) constitute an SH2 domain. The tract at residues 271-297 (HSADDNFGQDPNIEDRSEKFKKNPHNA) is disordered.

In terms of assembly, interacts with URI1; the interaction is phosphorylation-dependent occurs in a growth-dependent manner. Interacts with KIT and CSF1R. Post-translationally, phosphorylated on tyrosine by TEC. Phosphorylated on tyrosine by KIT. In terms of tissue distribution, expression restricted to the bone marrow.

It is found in the nucleus. The protein resides in the cytoplasm. Its subcellular location is the mitochondrion. Its function is as follows. May function as an adapter molecule downstream of KIT in the proliferation or differentiation of hematopoietic stem cells. The polypeptide is Signal-transducing adaptor protein 1 (Stap1) (Mus musculus (Mouse)).